Consider the following 67-residue polypeptide: UPF0337 protein msl9551 (67 aa).

The protein belongs to the UPF0337 (CsbD) family.

The protein is UPF0337 protein msl9551 of Mesorhizobium japonicum (strain LMG 29417 / CECT 9101 / MAFF 303099) (Mesorhizobium loti (strain MAFF 303099)).